Consider the following 52-residue polypeptide: Rubredoxin-2 (52 aa).

A Rubredoxin-like domain is found at 1 to 52 (MEQWKCNICGYIYNPETGDPEGDIPAGTSFESLPDSWMCPVCGAGKEEFTKI). Cys-6, Cys-9, Cys-39, and Cys-42 together coordinate Fe cation.

Belongs to the rubredoxin family. Monomer. It depends on Fe(3+) as a cofactor.

Its function is as follows. Serves as an electron acceptor for pyruvate ferredoxin oxidoreductase (PFOR). In Chlorobaculum tepidum (strain ATCC 49652 / DSM 12025 / NBRC 103806 / TLS) (Chlorobium tepidum), this protein is Rubredoxin-2 (rub2).